The primary structure comprises 241 residues: Sugar fermentation stimulation protein homolog (241 aa).

The protein belongs to the SfsA family.

The chain is Sugar fermentation stimulation protein homolog from Trichormus variabilis (strain ATCC 29413 / PCC 7937) (Anabaena variabilis).